The chain runs to 308 residues: Cytochrome b (308 aa).

The next 4 helical transmembrane spans lie at 1–21, 45–66, 81–101, and 146–166; these read FGSL…LLAT, WLIR…YLHI, WNTG…GYVL, and FFAL…VHLT. Heme b-binding residues include His-51 and His-65. His-150 and His-164 together coordinate heme b. His-169 is an a ubiquinone binding site. Transmembrane regions (helical) follow at residues 194–214, 256–276, and 288–308; these read MKDI…ALFS, LGGV…PLLH, and LSQI…WVGS.

It belongs to the cytochrome b family. As to quaternary structure, the cytochrome bc1 complex contains 11 subunits: 3 respiratory subunits (MT-CYB, CYC1 and UQCRFS1), 2 core proteins (UQCRC1 and UQCRC2) and 6 low-molecular weight proteins (UQCRH/QCR6, UQCRB/QCR7, UQCRQ/QCR8, UQCR10/QCR9, UQCR11/QCR10 and a cleavage product of UQCRFS1). This cytochrome bc1 complex then forms a dimer. Requires heme b as cofactor.

Its subcellular location is the mitochondrion inner membrane. Functionally, component of the ubiquinol-cytochrome c reductase complex (complex III or cytochrome b-c1 complex) that is part of the mitochondrial respiratory chain. The b-c1 complex mediates electron transfer from ubiquinol to cytochrome c. Contributes to the generation of a proton gradient across the mitochondrial membrane that is then used for ATP synthesis. In Amblyornis macgregoriae (Macgregor's bowerbird), this protein is Cytochrome b (MT-CYB).